The primary structure comprises 268 residues: Ubiquinone/menaquinone biosynthesis C-methyltransferase UbiE (268 aa).

Positions 1-23 are disordered; it reads MTDQHAFATEQVQLDPTLSPTTE. Residues 10–23 are compositionally biased toward polar residues; the sequence is EQVQLDPTLSPTTE. S-adenosyl-L-methionine contacts are provided by residues T91, D112, 140–141, and S157; that span reads NA.

It belongs to the class I-like SAM-binding methyltransferase superfamily. MenG/UbiE family.

It catalyses the reaction a 2-demethylmenaquinol + S-adenosyl-L-methionine = a menaquinol + S-adenosyl-L-homocysteine + H(+). It carries out the reaction a 2-methoxy-6-(all-trans-polyprenyl)benzene-1,4-diol + S-adenosyl-L-methionine = a 5-methoxy-2-methyl-3-(all-trans-polyprenyl)benzene-1,4-diol + S-adenosyl-L-homocysteine + H(+). It participates in quinol/quinone metabolism; menaquinone biosynthesis; menaquinol from 1,4-dihydroxy-2-naphthoate: step 2/2. Its pathway is cofactor biosynthesis; ubiquinone biosynthesis. Functionally, methyltransferase required for the conversion of demethylmenaquinol (DMKH2) to menaquinol (MKH2) and the conversion of 2-polyprenyl-6-methoxy-1,4-benzoquinol (DDMQH2) to 2-polyprenyl-3-methyl-6-methoxy-1,4-benzoquinol (DMQH2). This is Ubiquinone/menaquinone biosynthesis C-methyltransferase UbiE from Pasteurella multocida (strain Pm70).